The chain runs to 476 residues: NADH-quinone oxidoreductase subunit N (476 aa).

14 helical membrane passes run 5–25 (LALI…LMLG), 38–58 (LSAL…FGVE), 70–90 (AFGG…ILVA), 97–117 (GMRA…GIMA), 122–142 (LMTL…LASF), 157–177 (FVLG…LYGF), 196–218 (IGLI…AVPF), 231–253 (TPVT…ARIV), 264–284 (WQQI…VGAI), 292–312 (LLAY…AAGT), 318–338 (GVLT…LVVL), 364–384 (LAAA…LFGF), 401–421 (PLAV…IAII), and 445–465 (IVAA…PALA).

Belongs to the complex I subunit 2 family. In terms of assembly, NDH-1 is composed of 14 different subunits. Subunits NuoA, H, J, K, L, M, N constitute the membrane sector of the complex.

It localises to the cell inner membrane. The catalysed reaction is a quinone + NADH + 5 H(+)(in) = a quinol + NAD(+) + 4 H(+)(out). Functionally, NDH-1 shuttles electrons from NADH, via FMN and iron-sulfur (Fe-S) centers, to quinones in the respiratory chain. The immediate electron acceptor for the enzyme in this species is believed to be ubiquinone. Couples the redox reaction to proton translocation (for every two electrons transferred, four hydrogen ions are translocated across the cytoplasmic membrane), and thus conserves the redox energy in a proton gradient. This is NADH-quinone oxidoreductase subunit N from Sphingopyxis alaskensis (strain DSM 13593 / LMG 18877 / RB2256) (Sphingomonas alaskensis).